A 597-amino-acid polypeptide reads, in one-letter code: Elongation factor 4 (597 aa).

The region spanning lysine 2–glutamate 184 is the tr-type G domain. GTP is bound by residues aspartate 14–threonine 19 and asparagine 131–aspartate 134.

This sequence belongs to the TRAFAC class translation factor GTPase superfamily. Classic translation factor GTPase family. LepA subfamily.

It localises to the cell inner membrane. It carries out the reaction GTP + H2O = GDP + phosphate + H(+). Functionally, required for accurate and efficient protein synthesis under certain stress conditions. May act as a fidelity factor of the translation reaction, by catalyzing a one-codon backward translocation of tRNAs on improperly translocated ribosomes. Back-translocation proceeds from a post-translocation (POST) complex to a pre-translocation (PRE) complex, thus giving elongation factor G a second chance to translocate the tRNAs correctly. Binds to ribosomes in a GTP-dependent manner. The protein is Elongation factor 4 of Aliivibrio fischeri (strain ATCC 700601 / ES114) (Vibrio fischeri).